Here is a 145-residue protein sequence, read N- to C-terminus: Large ribosomal subunit protein uL11 (145 aa).

It belongs to the universal ribosomal protein uL11 family. Part of the ribosomal stalk of the 50S ribosomal subunit. Interacts with L10 and the large rRNA to form the base of the stalk. L10 forms an elongated spine to which L12 dimers bind in a sequential fashion forming a multimeric L10(L12)X complex. In terms of processing, one or more lysine residues are methylated.

Its function is as follows. Forms part of the ribosomal stalk which helps the ribosome interact with GTP-bound translation factors. This is Large ribosomal subunit protein uL11 from Hydrogenobaculum sp. (strain Y04AAS1).